The chain runs to 850 residues: Tripartite terminase subunit 1 (850 aa).

Residues Cys191–His219 form a C3H1-type zinc finger. Residues Gly438–Arg489 are disordered. Over residues Thr439–Asn457 the composition is skewed to low complexity. Over residues Asn458–Gly481 the composition is skewed to gly residues. Residue Tyr709–Gln716 participates in ATP binding. The interval Trp801–Leu831 is disordered. A compositionally biased stretch (basic residues) spans Arg816–Arg827. Residues Arg822–Arg827 carry the Nuclear localization signal motif.

This sequence belongs to the herpesviridae TRM1 protein family. In terms of assembly, associates with TRM2 and TRM3 to form the tripartite terminase complex. Interacts with portal protein.

The protein localises to the host nucleus. In terms of biological role, component of the molecular motor that translocates viral genomic DNA in empty capsid during DNA packaging. Forms a tripartite terminase complex together with TRM2 and TRM3 in the host cytoplasm. Once the complex reaches the host nucleus, it interacts with the capsid portal vertex. This portal forms a ring in which genomic DNA is translocated into the capsid. TRM1 carries an endonuclease activity that plays an important role for the cleavage of concatemeric viral DNA into unit length genomes. In Homo sapiens (Human), this protein is Tripartite terminase subunit 1.